A 376-amino-acid polypeptide reads, in one-letter code: Delta(12) fatty acid desaturase fat-2 (376 aa).

Helical transmembrane passes span 45-65, 69-89, 203-223, and 228-248; these read ISYLIKDYVLLAGLYFAVPYI, LGWIGLLGWYWAMGIVGSALF, VKCAVSGVACAICAYIAFVLC, and YTFVKYYYIPLLFQGLILVII.

This sequence belongs to the fatty acid desaturase type 1 family.

It is found in the membrane. It catalyses the reaction (9Z)-octadecenoyl-CoA + 2 Fe(II)-[cytochrome b5] + O2 + 2 H(+) = (9Z,12Z)-octadecadienoyl-CoA + 2 Fe(III)-[cytochrome b5] + 2 H2O. It carries out the reaction (9Z)-hexadecenoyl-CoA + 2 Fe(II)-[cytochrome b5] + O2 + 2 H(+) = (9Z,12Z)-hexadecadienoyl-CoA + 2 Fe(III)-[cytochrome b5] + 2 H2O. The enzyme catalyses (9Z,12Z)-octadecadienoyl-CoA + 2 Fe(II)-[cytochrome b5] + O2 + 2 H(+) = (9Z,12Z,15Z)-octadecatrienoyl-CoA + 2 Fe(III)-[cytochrome b5] + 2 H2O. The catalysed reaction is (9Z)-heptadecenoyl-CoA + 2 Fe(II)-[cytochrome b5] + O2 + 2 H(+) = (9Z,12Z)-heptadecadienoyl-CoA + 2 Fe(III)-[cytochrome b5] + 2 H2O. It catalyses the reaction (9Z)-pentadecenoyl-CoA + 2 Fe(II)-[cytochrome b5] + O2 + 2 H(+) = (9Z,12Z)-pentadecadienoyl-CoA + 2 Fe(III)-[cytochrome b5] + 2 H2O. It carries out the reaction (6Z,9Z,12Z)-octadecatrienoyl-CoA + 2 Fe(II)-[cytochrome b5] + O2 + 2 H(+) = (6Z,9Z,12Z,15Z)-octadecatetraenoyl-CoA + 2 Fe(III)-[cytochrome b5] + 2 H2O. The enzyme catalyses (9Z)-tetradecenoyl-CoA + 2 Fe(II)-[cytochrome b5] + O2 + 2 H(+) = (9Z,12Z)-tetradecadienoyl-CoA + 2 Fe(III)-[cytochrome b5] + 2 H2O. It functions in the pathway lipid metabolism; polyunsaturated fatty acid biosynthesis. Can function as a Delta(12)/Delta(15) bifunctional desaturase and behaves as a nu +3' desaturase. Introduces a double bond in the fatty acid chain three carbons away from an existing double bond to biosynthesize polyunsaturated fatty acids (PUFAs) endogenously (PUFAs are essential for membrane structure and many cellular and physiological processes). Acts on a number of substrates like oleoyl-CoA ((9Z)-octadecenoyl-CoA, 18:1n-9), palmitoleoyl-CoA ((9Z)-hexadecenoyl-CoA, 16:1n-7), and gamma-linolenoyl-CoA ((6Z,9Z,12Z)-octadecatrienoyl-CoA, 18:3n-6), to generate linoleoyl-CoA ((9Z,12Z)-octadecadienoyl-CoA, 18:2n-6), (9Z,12Z)-hexadecadienoyl-CoA (16:2n-4) and (6Z,9Z,12Z,15Z)-octadecatetraenoyl-CoA (18:4n-3) respectively. Unlike plants, Caenorhabditis elegans desaturases seem to use fatty acyl-CoAs as substrates. The polypeptide is Delta(12) fatty acid desaturase fat-2 (fat-2) (Caenorhabditis elegans).